The primary structure comprises 80 residues: Metallothionein-like protein BIF98 (80 aa).

The protein belongs to the metallothionein superfamily. Type 15 family.

Its function is as follows. Metallothioneins have a high content of cysteine residues that bind various heavy metals. In Brassica rapa subsp. pekinensis (Chinese cabbage), this protein is Metallothionein-like protein BIF98.